The chain runs to 414 residues: 2-acylphloroglucinol 4-prenyltransferase (414 aa).

A chloroplast-targeting transit peptide spans 1-86 (MELSSVSSFS…LKPLSIFSCK (86 aa)). The next 8 membrane-spanning stretches (helical) occupy residues 153-173 (FSWPLIFRALLGMLAILGSCF), 201-221 (ISVESAWLLTLSPAIIGFILI), 229-249 (LLTSLYCLAILSGTIYSVPPF), 256-276 (ITAFLCILMIHAGLNFSVYYA), 281-301 (LGLAFVWSPSFSFITAFITFM), 336-356 (LLGTGLLLLNYVAAISTAIIW), 359-379 (AFKSNIMLLSHAILAFSLFFQ), and 394-414 (KSFYEFIWILFSAEYVVYLFI).

This sequence belongs to the UbiA prenyltransferase family. As to quaternary structure, component an active demethylxanthohumol (DMX) biosynthetic metabolon in glandular trichomes (lupulin glands) that encompasses a chalcone synthase (CHS) and a membrane-bound prenyltransferase. Interacts with PT2, forming a functional metabolon. Interacts with CHIL2; this interaction promotes catalytic activity. Mg(2+) serves as cofactor. In terms of tissue distribution, expressed in trichomes.

It localises to the plastid. It is found in the chloroplast membrane. It carries out the reaction 2',4,4',6'-tetrahydroxychalcone + dimethylallyl diphosphate = desmethylxanthohumol + diphosphate. The catalysed reaction is a 2-acylphloroglucinol + dimethylallyl diphosphate = a 2-acyl-4-prenylphloroglucinol + diphosphate. It participates in secondary metabolite biosynthesis. Stimulated by CHIL2 but inhibited by CHIL1. Its function is as follows. Involved in the biosynthesis of prenylated phenolics natural products which contribute to the bitter taste of beer and display broad biological activities. Catalyzes the first prenylation step in the beta-bitter acid pathway. Uses dimethylallyl diphosphate (DMAPP) as the prenyl donor. The polypeptide is 2-acylphloroglucinol 4-prenyltransferase (Humulus lupulus (European hop)).